The following is a 1347-amino-acid chain: Neurofascin (1347 aa).

The signal sequence occupies residues 1–24 (MARQPPPPWVHAAFLLCLLSLGGA). Over 25–1217 (IEIPMDPSIQ…NQADIATQGW (1193 aa)) the chain is Extracellular. Ig-like C2-type domains are found at residues 41–137 (PTIT…LQVS), 143–230 (PKEN…NPFT), 244–332 (PSFM…ISVR), 337–424 (PYWL…AFVS), 429–517 (PPRM…VRLE), and 521–603 (PTRI…QDLA). Cystine bridges form between Cys63–Cys118, Cys162–Cys213, Cys268–Cys316, and Cys358–Cys408. N-linked (GlcNAc...) asparagine glycosylation is present at Asn305. Residues Asn409 and Asn446 are each glycosylated (N-linked (GlcNAc...) asparagine). Disulfide bonds link Cys452–Cys501 and Cys543–Cys592. The residue at position 481 (Tyr481) is a Phosphotyrosine. An N-linked (GlcNAc...) asparagine glycan is attached at Asn483. Ser485 carries the post-translational modification Phosphoserine. Fibronectin type-III domains are found at residues 630-725 (RPRD…TSGA), 730-823 (NPGD…SGED), 828-930 (APTE…TPEG), and 934-1030 (APRR…PNEA). Residues 713–740 (PSLPSERYRTSGAPPESNPGDVKGEGTR) form a disordered region. Asn752 and Asn778 each carry an N-linked (GlcNAc...) asparagine glycan. A disordered region spans residues 915–934 (GDGPRSETKEFTTPEGVPSA). The segment covering 916–926 (DGPRSETKEFT) has biased composition (basic and acidic residues). Asn973 and Asn988 each carry an N-linked (GlcNAc...) asparagine glycan. Disordered stretches follow at residues 1011 to 1040 (TQVGSGEAVTEESPAPPNEATPTAAPPTLP) and 1090 to 1111 (TTAAATTTTESPPTTTSGTKIH). Over residues 1024–1040 (PAPPNEATPTAAPPTLP) the composition is skewed to pro residues. Positions 1090-1105 (TTAAATTTTESPPTTT) are enriched in low complexity. The 93-residue stretch at 1114–1206 (APDEQSIWNV…ITFMTSTAYT (93 aa)) folds into the Fibronectin type-III 5 domain. A helical transmembrane segment spans residues 1218–1238 (FIGLMCAIALLVLILLIVCFI). Over 1239-1347 (KRSRGGKYPV…SPVNAIYSLA (109 aa)) the chain is Cytoplasmic. Residues 1248 to 1347 (VREKKDVPLG…SPVNAIYSLA (100 aa)) are disordered. Positions 1261–1272 (PKEEDGSFDYSD) are enriched in acidic residues. A phosphoserine mark is found at Ser1267, Ser1281, Ser1294, Ser1297, Ser1333, Ser1334, and Ser1338. Positions 1278–1291 (LQGSQTSLDGTIKQ) are enriched in polar residues.

It belongs to the immunoglobulin superfamily. L1/neurofascin/NgCAM family. As to quaternary structure, horseshoe-shaped homodimer. Probable constituent of a NFASC/NRCAM/ankyrin-G complex. Associates with the sodium channel beta-1 (SCN1B) and beta-3 (SCN3B) subunits. Interacts with GLDN/gliomedin. Interacts with MYOC.

It localises to the cell membrane. Its subcellular location is the cell junction. The protein resides in the paranodal septate junction. Its function is as follows. Cell adhesion, ankyrin-binding protein which may be involved in neurite extension, axonal guidance, synaptogenesis, myelination and neuron-glial cell interactions. The chain is Neurofascin (NFASC) from Homo sapiens (Human).